Here is a 427-residue protein sequence, read N- to C-terminus: Glutamate-1-semialdehyde 2,1-aminomutase (427 aa).

Lys-265 is subject to N6-(pyridoxal phosphate)lysine.

It belongs to the class-III pyridoxal-phosphate-dependent aminotransferase family. HemL subfamily. As to quaternary structure, homodimer. The cofactor is pyridoxal 5'-phosphate.

It localises to the cytoplasm. It catalyses the reaction (S)-4-amino-5-oxopentanoate = 5-aminolevulinate. It participates in porphyrin-containing compound metabolism; protoporphyrin-IX biosynthesis; 5-aminolevulinate from L-glutamyl-tRNA(Glu): step 2/2. The chain is Glutamate-1-semialdehyde 2,1-aminomutase from Neisseria meningitidis serogroup C (strain 053442).